The following is a 152-amino-acid chain: MAKSILLINGPNLNLLGTREPSIYGSTTLPQVVESASSQCSRLSITFSHIQSNHEGVLIDRIHEARGNVDAIVINPGALTHTSVGLRDALVGVDIPFVEVHISNIHKREAFRHHSYLSDKAEAVICGLGTYGYEAAIEYAARHIKPKGEAQL.

Catalysis depends on Y24, which acts as the Proton acceptor. Positions 75, 81, and 88 each coordinate substrate. Residue H101 is the Proton donor of the active site. Residues 102-103 (IS) and R112 contribute to the substrate site.

It belongs to the type-II 3-dehydroquinase family. Homododecamer. Adopts a ring-like structure, composed of an arrangement of two hexameric rings stacked on top of one another.

It catalyses the reaction 3-dehydroquinate = 3-dehydroshikimate + H2O. It participates in aromatic compound metabolism; 3,4-dihydroxybenzoate biosynthesis; 3,4-dihydroxybenzoate from 3-dehydroquinate: step 1/2. In terms of biological role, is involved in the catabolism of quinate. Allows the utilization of quinate as carbon source via the beta-ketoadipate pathway. The protein is Catabolic 3-dehydroquinase of Phaeosphaeria nodorum (strain SN15 / ATCC MYA-4574 / FGSC 10173) (Glume blotch fungus).